The primary structure comprises 241 residues: Regulatory protein VirG (241 aa).

Residues 3 to 117 (HVLVIDDDVA…EFLARIRVAL (115 aa)) form the Response regulatory domain. D52 carries the 4-aspartylphosphate modification. Positions 129-229 (RRSFYFADWT…ARGAGYFFDA (101 aa)) form a DNA-binding region, ompR/PhoB-type.

Phosphorylated by wide host range (WHR) VirA protein.

Its subcellular location is the cytoplasm. In terms of biological role, virG is required for the positive regulation of at least two vir loci encoded by the Ri plasmid of A.rhizogenes. The polypeptide is Regulatory protein VirG (virG) (Rhizobium rhizogenes (Agrobacterium rhizogenes)).